The following is a 265-amino-acid chain: Cytochrome c oxidase subunit 3 (265 aa).

A run of 6 helical transmembrane segments spans residues 16–36 (PWPI…VMYM), 41–61 (GGAT…FVWW), 84–104 (YGSI…FWAS), 162–182 (AVYA…FQGM), 200–220 (FLLA…FLIV), and 242–262 (AWYW…IYWW).

Belongs to the cytochrome c oxidase subunit 3 family. Component of the cytochrome c oxidase (complex IV, CIV), a multisubunit enzyme composed of a catalytic core of 3 subunits and several supernumerary subunits. The complex exists as a monomer or a dimer and forms supercomplexes (SCs) in the inner mitochondrial membrane with ubiquinol-cytochrome c oxidoreductase (cytochrome b-c1 complex, complex III, CIII).

The protein resides in the mitochondrion inner membrane. The catalysed reaction is 4 Fe(II)-[cytochrome c] + O2 + 8 H(+)(in) = 4 Fe(III)-[cytochrome c] + 2 H2O + 4 H(+)(out). Component of the cytochrome c oxidase, the last enzyme in the mitochondrial electron transport chain which drives oxidative phosphorylation. The respiratory chain contains 3 multisubunit complexes succinate dehydrogenase (complex II, CII), ubiquinol-cytochrome c oxidoreductase (cytochrome b-c1 complex, complex III, CIII) and cytochrome c oxidase (complex IV, CIV), that cooperate to transfer electrons derived from NADH and succinate to molecular oxygen, creating an electrochemical gradient over the inner membrane that drives transmembrane transport and the ATP synthase. Cytochrome c oxidase is the component of the respiratory chain that catalyzes the reduction of oxygen to water. Electrons originating from reduced cytochrome c in the intermembrane space (IMS) are transferred via the dinuclear copper A center (CU(A)) of subunit 2 and heme A of subunit 1 to the active site in subunit 1, a binuclear center (BNC) formed by heme A3 and copper B (CU(B)). The BNC reduces molecular oxygen to 2 water molecules using 4 electrons from cytochrome c in the IMS and 4 protons from the mitochondrial matrix. The protein is Cytochrome c oxidase subunit 3 (COX3) of Zea mays (Maize).